Reading from the N-terminus, the 291-residue chain is Transmembrane O-methyltransferase (291 aa).

A helical membrane pass occupies residues 31 to 51 (VGTMSPAIALAFLPLVVTLLV). S-adenosyl-L-methionine is bound by residues Glu137, 139–140 (GT), Ser145, Glu163, and Ser193.

This sequence belongs to the class I-like SAM-binding methyltransferase superfamily. Cation-dependent O-methyltransferase family. Interacts with LHFPL5, PCDH15, TMC1, TMC2 and TMIE. Interacts directly with TMC1. The interaction of TOMT with TMC1 and TMC2 is required for the transportation of TMC1/2 into the stereocilia of hair cells.

Its subcellular location is the membrane. It is found in the cytoplasm. The protein localises to the endoplasmic reticulum. It catalyses the reaction a catechol + S-adenosyl-L-methionine = a guaiacol + S-adenosyl-L-homocysteine + H(+). Functionally, catalyzes the O-methylation, and thereby the inactivation, of catecholamine neurotransmitters and catechol hormones. Required for auditory function. Component of the cochlear hair cell's mechanotransduction (MET) machinery. Involved in the assembly of the asymmetric tip-link MET complex. Required for transportation of TMC1 and TMC2 proteins into the mechanically sensitive stereocilia of the hair cells. The function in MET is independent of the enzymatic activity. The polypeptide is Transmembrane O-methyltransferase (Pan troglodytes (Chimpanzee)).